A 507-amino-acid polypeptide reads, in one-letter code: ATP synthase subunit alpha (507 aa).

An ATP-binding site is contributed by 169–176 (GDRQTGKT).

This sequence belongs to the ATPase alpha/beta chains family. In terms of assembly, F-type ATPases have 2 components, CF(1) - the catalytic core - and CF(0) - the membrane proton channel. CF(1) has five subunits: alpha(3), beta(3), gamma(1), delta(1), epsilon(1). CF(0) has three main subunits: a(1), b(2) and c(9-12). The alpha and beta chains form an alternating ring which encloses part of the gamma chain. CF(1) is attached to CF(0) by a central stalk formed by the gamma and epsilon chains, while a peripheral stalk is formed by the delta and b chains.

The protein localises to the cell inner membrane. The enzyme catalyses ATP + H2O + 4 H(+)(in) = ADP + phosphate + 5 H(+)(out). Functionally, produces ATP from ADP in the presence of a proton gradient across the membrane. The alpha chain is a regulatory subunit. The sequence is that of ATP synthase subunit alpha from Magnetococcus marinus (strain ATCC BAA-1437 / JCM 17883 / MC-1).